The primary structure comprises 245 residues: MIVIPAIDLKEGKCVRLEQGLMERDTVYSDDPAAQALVWEAKGAELLHIVDLDGAFAGEPKNRGAIEAIVKALKITTQLGGGIRDLATIEAYLGMGIGRVIIGTAAQRNPELVQEACRKFPGRIVVGIDAKNGMVAVQGWAEVTGVTAIDLAKKFEGFGVAAIVYTDISRDGMMKGPNIEATRNLAEAITIPVIASGGVSALRDIENLMAVEAAGISGAITGKAIYSGAIELSEAIALTRRGASC.

Catalysis depends on Asp-8, which acts as the Proton acceptor. Asp-129 (proton donor) is an active-site residue.

This sequence belongs to the HisA/HisF family.

Its subcellular location is the cytoplasm. The enzyme catalyses 1-(5-phospho-beta-D-ribosyl)-5-[(5-phospho-beta-D-ribosylamino)methylideneamino]imidazole-4-carboxamide = 5-[(5-phospho-1-deoxy-D-ribulos-1-ylimino)methylamino]-1-(5-phospho-beta-D-ribosyl)imidazole-4-carboxamide. Its pathway is amino-acid biosynthesis; L-histidine biosynthesis; L-histidine from 5-phospho-alpha-D-ribose 1-diphosphate: step 4/9. This Geotalea daltonii (strain DSM 22248 / JCM 15807 / FRC-32) (Geobacter daltonii) protein is 1-(5-phosphoribosyl)-5-[(5-phosphoribosylamino)methylideneamino] imidazole-4-carboxamide isomerase.